The sequence spans 267 residues: 3-methyl-2-oxobutanoate hydroxymethyltransferase (267 aa).

Residues Asp46 and Asp85 each contribute to the Mg(2+) site. 3-methyl-2-oxobutanoate is bound by residues 46–47 (DS), Asp85, and Lys115. Position 117 (Glu117) interacts with Mg(2+). Glu184 serves as the catalytic Proton acceptor.

The protein belongs to the PanB family. In terms of assembly, homodecamer; pentamer of dimers. The cofactor is Mg(2+).

The protein resides in the cytoplasm. The enzyme catalyses 3-methyl-2-oxobutanoate + (6R)-5,10-methylene-5,6,7,8-tetrahydrofolate + H2O = 2-dehydropantoate + (6S)-5,6,7,8-tetrahydrofolate. Its pathway is cofactor biosynthesis; (R)-pantothenate biosynthesis; (R)-pantoate from 3-methyl-2-oxobutanoate: step 1/2. Catalyzes the reversible reaction in which hydroxymethyl group from 5,10-methylenetetrahydrofolate is transferred onto alpha-ketoisovalerate to form ketopantoate. This chain is 3-methyl-2-oxobutanoate hydroxymethyltransferase, found in Geobacter metallireducens (strain ATCC 53774 / DSM 7210 / GS-15).